A 671-amino-acid polypeptide reads, in one-letter code: Replication protein A 70 kDa DNA-binding subunit (671 aa).

Disordered regions lie at residues 143-166 (QVSQPKQMVTPPVSNINKPTPAVN) and 190-219 (MNKTAPVKQNNNNNNNNNGNNKNNSSLQIS). Residues 199-213 (NNNNNNNNNGNNKNN) show a composition bias toward low complexity. The OB DNA-binding region spans 240–322 (QTIKVRITKK…NKGDHTVTVN (83 aa)). The C4-type zinc-finger motif lies at 530–549 (CFSCKKKIARNNEVWTCINC).

Belongs to the replication factor A protein 1 family. Component of the replication protein A complex (RPA), a heterotrimeric complex composed of RPA1, RPA2/TEB2 and RPA3/TEB3.

In terms of biological role, as part of the heterotrimeric replication protein A (RPA) complex, binds and stabilizes single-stranded DNA intermediates, that form during DNA replication or upon DNA stress. It prevents their reannealing and in parallel, recruits and activates different proteins and complexes involved in DNA metabolism. Thereby, it plays an essential role both in DNA replication and the cellular response to DNA damage. In the cellular response to DNA damage, the RPA complex controls DNA repair and DNA damage checkpoint activation. The polypeptide is Replication protein A 70 kDa DNA-binding subunit (Tetrahymena thermophila (strain SB210)).